A 239-amino-acid chain; its full sequence is NAD-dependent protein deacylase (239 aa).

A Deacetylase sirtuin-type domain is found at 1 to 234; that stretch reads MENLNIVTLT…KKVYDYLREK (234 aa). NAD(+)-binding positions include 11–30 and 89–92; these read GAGI…DGLW and QNVD. His-107 functions as the Proton acceptor in the catalytic mechanism. The Zn(2+) site is built by Cys-115, Cys-118, Cys-136, and Cys-139. NAD(+) contacts are provided by residues 176–178, 202–204, and Ala-220; these read GTS and NPE.

This sequence belongs to the sirtuin family. Class III subfamily. Zn(2+) serves as cofactor.

It is found in the cytoplasm. The catalysed reaction is N(6)-acetyl-L-lysyl-[protein] + NAD(+) + H2O = 2''-O-acetyl-ADP-D-ribose + nicotinamide + L-lysyl-[protein]. NAD-dependent protein deacetylase which modulates the activities of several proteins which are inactive in their acetylated form. The chain is NAD-dependent protein deacylase from Aquifex aeolicus (strain VF5).